The chain runs to 257 residues: Phosphate import ATP-binding protein PstB (257 aa).

In terms of domain architecture, ABC transporter spans 11–252 (IQVRDLNFYY…PAKKQTEDYI (242 aa)). ATP is bound at residue 43–50 (GPSGCGKS).

Belongs to the ABC transporter superfamily. Phosphate importer (TC 3.A.1.7) family. In terms of assembly, the complex is composed of two ATP-binding proteins (PstB), two transmembrane proteins (PstC and PstA) and a solute-binding protein (PstS).

The protein localises to the cell inner membrane. It carries out the reaction phosphate(out) + ATP + H2O = ADP + 2 phosphate(in) + H(+). Functionally, part of the ABC transporter complex PstSACB involved in phosphate import. Responsible for energy coupling to the transport system. The sequence is that of Phosphate import ATP-binding protein PstB from Enterobacter cloacae.